Here is a 162-residue protein sequence, read N- to C-terminus: Phenazine biosynthesis protein PhzB1 (162 aa).

The protein belongs to the PhzA/PhzB family. In terms of assembly, homodimer.

The protein operates within antibiotic biosynthesis; phenazine biosynthesis. Involved in the biosynthesis of the antibiotic phenazine, a nitrogen-containing heterocyclic molecule. PhzB1 (operon phzA1B1C1E1F1G1) has a role in the biosynthesis of the phenazine during planktonic growth. The protein is Phenazine biosynthesis protein PhzB1 of Pseudomonas aeruginosa (strain ATCC 15692 / DSM 22644 / CIP 104116 / JCM 14847 / LMG 12228 / 1C / PRS 101 / PAO1).